Here is a 394-residue protein sequence, read N- to C-terminus: Chorismate synthase (394 aa).

Arg62 serves as a coordination point for NADP(+). FMN-binding positions include 144-146 (RAS), Gly307, 322-326 (KPTPT), and Arg349.

This sequence belongs to the chorismate synthase family. In terms of assembly, homotetramer. FMNH2 serves as cofactor.

It catalyses the reaction 5-O-(1-carboxyvinyl)-3-phosphoshikimate = chorismate + phosphate. It functions in the pathway metabolic intermediate biosynthesis; chorismate biosynthesis; chorismate from D-erythrose 4-phosphate and phosphoenolpyruvate: step 7/7. Its function is as follows. Catalyzes the anti-1,4-elimination of the C-3 phosphate and the C-6 proR hydrogen from 5-enolpyruvylshikimate-3-phosphate (EPSP) to yield chorismate, which is the branch point compound that serves as the starting substrate for the three terminal pathways of aromatic amino acid biosynthesis. This reaction introduces a second double bond into the aromatic ring system. This chain is Chorismate synthase, found in Acetivibrio thermocellus (strain ATCC 27405 / DSM 1237 / JCM 9322 / NBRC 103400 / NCIMB 10682 / NRRL B-4536 / VPI 7372) (Clostridium thermocellum).